The primary structure comprises 205 residues: Nitrophorin-7 (205 aa).

The N-terminal stretch at 1–20 (MELYTALLAVTILSPSSIVG) is a signal peptide. 2 disulfide bridges follow: cysteine 25–cysteine 144 and cysteine 62–cysteine 193. A histamine-binding site is contributed by aspartate 52. Residues histidine 80 and asparagine 91 each contribute to the heme site. A histamine-binding site is contributed by aspartate 154.

This sequence belongs to the calycin superfamily. Nitrophorin family. As to quaternary structure, forms oligomers (at pH 5.5). The cofactor is heme b. As to expression, expressed in the endothelial cells of the salivary glands.

It localises to the secreted. The catalysed reaction is 3 nitrite + 2 H(+) = 2 nitric oxide + nitrate + H2O. Functionally, converts nitrite as the sole substrate to form nitric oxide gas (NO). NO(2-) serves both as an electron donor and as an electron acceptor. Binds to negatively charged cell surfaces of activated platelets; binds to L-a-phosphatidyl-L-serine (PS)-bearing phospholipid membranes. Once bound on an activated platelet, NP7 releases its stored nitric oxide gas (NO) into the victim's tissues while feeding, resulting in vasodilation and inhibition of platelet aggregation. Also acts as an anticoagulant by blocking coagulation-factor binding sites. Has antihistamine activity; binds histamine with high affinity. This chain is Nitrophorin-7, found in Rhodnius prolixus (Triatomid bug).